Here is a 72-residue protein sequence, read N- to C-terminus: Translational regulator CsrA (72 aa).

Belongs to the CsrA/RsmA family. In terms of assembly, homodimer; the beta-strands of each monomer intercalate to form a hydrophobic core, while the alpha-helices form wings that extend away from the core.

The protein resides in the cytoplasm. Functionally, a translational regulator that binds mRNA to regulate translation initiation and/or mRNA stability. Usually binds in the 5'-UTR at or near the Shine-Dalgarno sequence preventing ribosome-binding, thus repressing translation. Its main target seems to be the major flagellin gene, while its function is anatagonized by FliW. This is Translational regulator CsrA from Clostridium botulinum (strain 657 / Type Ba4).